A 238-amino-acid chain; its full sequence is Chromosome partition protein MukE (238 aa).

Positions glutamate 206–alanine 238 are disordered. The segment covering asparagine 218 to alanine 238 has biased composition (basic and acidic residues).

This sequence belongs to the MukE family. Interacts, and probably forms a ternary complex, with MukF and MukB. The complex formation is stimulated by calcium or magnesium.

It localises to the cytoplasm. Its subcellular location is the nucleoid. Functionally, involved in chromosome condensation, segregation and cell cycle progression. May participate in facilitating chromosome segregation by condensation DNA from both sides of a centrally located replisome during cell division. Probably acts via its interaction with MukB and MukF. The chain is Chromosome partition protein MukE from Aliivibrio salmonicida (strain LFI1238) (Vibrio salmonicida (strain LFI1238)).